Consider the following 204-residue polypeptide: Protein FAM167A (204 aa).

Residues glycine 58–proline 80 are disordered. Residues leucine 113 to threonine 146 are a coiled coil.

This sequence belongs to the FAM167 (SEC) family.

The sequence is that of Protein FAM167A (fam167a) from Danio rerio (Zebrafish).